Reading from the N-terminus, the 466-residue chain is Histidine--tRNA ligase (466 aa).

The protein belongs to the class-II aminoacyl-tRNA synthetase family. In terms of assembly, homodimer.

It localises to the cytoplasm. It carries out the reaction tRNA(His) + L-histidine + ATP = L-histidyl-tRNA(His) + AMP + diphosphate + H(+). The protein is Histidine--tRNA ligase (hisS) of Xylella fastidiosa (strain 9a5c).